Consider the following 357-residue polypeptide: Acyl-CoA Delta12-desaturase (357 aa).

The next 2 helical transmembrane spans lie at 49-69 (VLWFVLLHAGALYGVYLIFAS) and 72-92 (IYTTLYGFLLCELSLLSITAG). Positions 94, 99, 131, 134, and 135 each coordinate Fe cation. The Histidine box-1 motif lies at 94-99 (HRLWAH). The Histidine box-2 signature appears at 131 to 135 (HRVHH). Transmembrane regions (helical) follow at residues 195-215 (LVPFVSFVIPTLIPMYFWGET) and 223-245 (STMFRYCLSLNLTWLVNSAAHMW). Fe cation-binding residues include His-243, His-272, His-275, and His-276. The Histidine box-3 signature appears at 272 to 276 (HNFHH).

The protein belongs to the fatty acid desaturase type 1 family. Fe(2+) is required as a cofactor.

The protein resides in the membrane. It catalyses the reaction (9Z)-octadecenoyl-CoA + 2 Fe(II)-[cytochrome b5] + O2 + 2 H(+) = (9Z,12Z)-octadecadienoyl-CoA + 2 Fe(III)-[cytochrome b5] + 2 H2O. The catalysed reaction is (9Z)-hexadecenoyl-CoA + 2 Fe(II)-[cytochrome b5] + O2 + 2 H(+) = (9Z,12Z)-hexadecadienoyl-CoA + 2 Fe(III)-[cytochrome b5] + 2 H2O. The enzyme catalyses hexadecanoyl-CoA + 2 Fe(II)-[cytochrome b5] + O2 + 2 H(+) = (9Z)-hexadecenoyl-CoA + 2 Fe(III)-[cytochrome b5] + 2 H2O. In terms of biological role, catalyzes the formation of a Delta12 double bond, acting on monounsaturated fatty acyl substrates like palmitoleoyl-CoA ((9Z)-hexadecenoyl-CoA) and oleoyl-CoA ((9Z)-octadecenoyl-CoA) with higher desaturation activity on (9Z)-octadecenoyl-CoA than (9Z)-hexadecenoyl-CoA. Requires preexisting cis double bond at the Delta9 position of fatty acyls to be able to insert the Delta12 double bond. Delta12-desaturation of (9Z)-octadecenoyl-CoA in insects produces (9Z,12Z)-octadecadienoyl-CoA (linoleoyl-CoA) which may be used to supply precursors of crucial mediators of immunity and reproduction and other essential functions. Can also catalyze Delta9-desaturation on saturated fatty acyl substrates like palmitoyl-CoA (hexadecanoyl-CoA) but with lower efficiency. The polypeptide is Acyl-CoA Delta12-desaturase (Acheta domesticus (House cricket)).